Reading from the N-terminus, the 443-residue chain is Immediate-early protein ICP-46 homolog (443 aa).

Residues 82–110 (EFSEHEQEELKEKMAQLNHCLEDCELDYS) are a coiled coil.

This sequence belongs to the IIV-6 393L family.

This is Immediate-early protein ICP-46 homolog from Aedes vexans (Inland floodwater mosquito).